Reading from the N-terminus, the 494-residue chain is Glycerol kinase (494 aa).

Thr-13 is an ADP binding site. Residues Thr-13, Thr-14, and Ser-15 each contribute to the ATP site. A sn-glycerol 3-phosphate-binding site is contributed by Thr-13. Arg-17 serves as a coordination point for ADP. 4 residues coordinate sn-glycerol 3-phosphate: Arg-83, Glu-84, Tyr-135, and Asp-244. Positions 83, 84, 135, 244, and 245 each coordinate glycerol. 2 residues coordinate ADP: Thr-266 and Gly-309. 4 residues coordinate ATP: Thr-266, Gly-309, Gln-313, and Gly-410. 2 residues coordinate ADP: Gly-410 and Asn-414.

Belongs to the FGGY kinase family.

It carries out the reaction glycerol + ATP = sn-glycerol 3-phosphate + ADP + H(+). It functions in the pathway polyol metabolism; glycerol degradation via glycerol kinase pathway; sn-glycerol 3-phosphate from glycerol: step 1/1. Inhibited by fructose 1,6-bisphosphate (FBP). In terms of biological role, key enzyme in the regulation of glycerol uptake and metabolism. Catalyzes the phosphorylation of glycerol to yield sn-glycerol 3-phosphate. This Shewanella baltica (strain OS223) protein is Glycerol kinase.